A 462-amino-acid chain; its full sequence is UDP-N-acetylmuramate--L-alanine ligase (462 aa).

114-120 (GSHGKTT) provides a ligand contact to ATP.

It belongs to the MurCDEF family.

It is found in the cytoplasm. The catalysed reaction is UDP-N-acetyl-alpha-D-muramate + L-alanine + ATP = UDP-N-acetyl-alpha-D-muramoyl-L-alanine + ADP + phosphate + H(+). Its pathway is cell wall biogenesis; peptidoglycan biosynthesis. Its function is as follows. Cell wall formation. The protein is UDP-N-acetylmuramate--L-alanine ligase of Brachyspira hyodysenteriae (strain ATCC 49526 / WA1).